A 374-amino-acid polypeptide reads, in one-letter code: Probable tuliposide A-converting enzyme b6, amyloplastic (374 aa).

An amyloplast-targeting transit peptide spans 1–68; that stretch reads MSVALFCGPP…TNSSLSPSPT (68 aa). Catalysis depends on Ser226, which acts as the Acyl-ester intermediate. Active-site charge relay system residues include Asp316 and His348.

The protein belongs to the AB hydrolase superfamily. In terms of assembly, homodimer.

It localises to the plastid. The protein localises to the amyloplast. It carries out the reaction 6-tuliposide A = tulipalin A + D-glucose. Functionally, lactone-forming carboxylesterases, specifically catalyzing intramolecular transesterification, but not hydrolysis. Involved in the biosynthesis of tulipalins, defensive chemicals that show antimicrobial activities against a broad range of strains of bacteria and fungi. Substrates are 6-tuliposide A &gt; 6-tuliposide B. This Tulipa gesneriana (Garden tulip) protein is Probable tuliposide A-converting enzyme b6, amyloplastic (TCEA-B6).